A 281-amino-acid polypeptide reads, in one-letter code: MTKHGFLLATLVLAGATLPIGPVTAATPEEEQAAFQAYFKQRFPNVPEDEFKNGTYAIDPVTRENWEAIEEFPPYENAISQGETLWNTPFADGQGYADCFPDGPAIMNHYPRWDRERGQVMTLPLALNACRTAHGETPLKYKKGPIADLLAYIAFESRGQITRVEIPQDDPRALAAYEQGKRFYFARRGQLNFACAHCHLATSGTKLRTETLSPAYGHTTHWPVYRSEWGEMGTLHRRFAGCNEQVRAKAFEPQGEEYRNLEYFLTYMNNGLELNGPGARK.

The N-terminal stretch at 1 to 25 (MTKHGFLLATLVLAGATLPIGPVTA) is a signal peptide. A disulfide bridge links Cys99 with Cys130. In terms of domain architecture, Cytochrome c spans 175 to 281 (AAYEQGKRFY…LELNGPGARK (107 aa)). Heme-binding residues include Cys195 and His199. A substrate-binding site is contributed by Arg238. Cys242 serves as a coordination point for heme. Cys242 acts as the Cysteine persulfide intermediate in catalysis.

It belongs to the SoxA family. As to quaternary structure, heterodimer of SoxA and SoxX. It depends on heme as a cofactor. Cysteine persulfide at Cys-242.

It is found in the periplasm. The catalysed reaction is L-cysteinyl-[SoxY protein] + thiosulfate + 2 Fe(III)-[cytochrome c] = S-sulfosulfanyl-L-cysteinyl-[SoxY protein] + 2 Fe(II)-[cytochrome c] + 2 H(+). It carries out the reaction S-sulfanyl-L-cysteinyl-[SoxY protein] + thiosulfate + 2 Fe(III)-[cytochrome c] = S-(2-sulfodisulfanyl)-L-cysteinyl-[SoxY protein] + 2 Fe(II)-[cytochrome c] + 2 H(+). C-type monoheme cytochrome, which is part of the SoxAX cytochrome complex involved in sulfur oxidation. The SoxAX complex catalyzes the formation of a heterodisulfide bond between the conserved cysteine residue on a sulfur carrier SoxYZ complex subunit SoxY and thiosulfate or other inorganic sulfur substrates. This leads to the intermediary formation of conspicuous sulfur globules inside of the cells. The sequence is that of L-cysteine S-thiosulfotransferase subunit SoxA from Allochromatium vinosum (Chromatium vinosum).